We begin with the raw amino-acid sequence, 181 residues long: Cytochrome c-type biogenesis protein CcmE (181 aa).

Residues Met1–Arg8 are Cytoplasmic-facing. A helical; Signal-anchor for type II membrane protein membrane pass occupies residues Leu9–Ala29. The Periplasmic portion of the chain corresponds to Leu30–Asn181. His131 and Tyr135 together coordinate heme. Composition is skewed to basic and acidic residues over residues Tyr135–His148 and Ala156–Lys166. Residues Tyr135–Lys166 are disordered.

This sequence belongs to the CcmE/CycJ family.

It is found in the cell inner membrane. Its function is as follows. Heme chaperone required for the biogenesis of c-type cytochromes. Transiently binds heme delivered by CcmC and transfers the heme to apo-cytochromes in a process facilitated by CcmF and CcmH. The polypeptide is Cytochrome c-type biogenesis protein CcmE (Actinobacillus pleuropneumoniae serotype 7 (strain AP76)).